The chain runs to 698 residues: MOXD1 homolog 1 (698 aa).

The signal sequence occupies residues 1–20 (MSVQDVLWIVLTVQLSFGLA). Asn-36, Asn-140, and Asn-221 each carry an N-linked (GlcNAc...) asparagine glycan. A DOMON domain is found at 54–174 (GLYWLKWWIN…DTFKVLWSIG (121 aa)). Tyr-232 is a catalytic residue. His-265 and His-266 together coordinate Cu cation. A disulfide bridge connects residues Cys-272 and Cys-309. The Cu cation site is built by His-347, His-425, and His-427. 2 disulfides stabilise this stretch: Cys-403-Cys-516 and Cys-479-Cys-501. The active site involves His-425. N-linked (GlcNAc...) asparagine glycosylation is present at Asn-465. Met-500 provides a ligand contact to Cu cation. 2 N-linked (GlcNAc...) asparagine glycosylation sites follow: Asn-538 and Asn-561.

Belongs to the copper type II ascorbate-dependent monooxygenase family. Cu(2+) serves as cofactor.

Its subcellular location is the secreted. In Drosophila melanogaster (Fruit fly), this protein is MOXD1 homolog 1.